The chain runs to 544 residues: Elongator complex protein 3 (544 aa).

Residues 79-369 (RTASGIAVVA…YRIQRDIPMP (291 aa)) enclose the Radical SAM core domain. Residues cysteine 96, cysteine 106, and cysteine 109 each contribute to the [4Fe-4S] cluster site. Acetyl-CoA-binding positions include lysine 161, 472-475 (ELHV), 495-497 (FGT), and tyrosine 528. Residues 393-544 (TKCRDIRARE…LDGPYMSKWL (152 aa)) enclose the N-acetyltransferase domain.

Belongs to the ELP3 family. As to quaternary structure, component of the elongator complex. The cofactor is [4Fe-4S] cluster.

It is found in the cytoplasm. It catalyses the reaction uridine(34) in tRNA + acetyl-CoA + S-adenosyl-L-methionine + H2O = 5-(carboxymethyl)uridine(34) in tRNA + 5'-deoxyadenosine + L-methionine + CoA + 2 H(+). The protein operates within tRNA modification; 5-methoxycarbonylmethyl-2-thiouridine-tRNA biosynthesis. Functionally, catalytic tRNA acetyltransferase subunit of the elongator complex which is required for multiple tRNA modifications, including mcm5U (5-methoxycarbonylmethyl uridine), mcm5s2U (5-methoxycarbonylmethyl-2-thiouridine), and ncm5U (5-carbamoylmethyl uridine). In the elongator complex, acts as a tRNA uridine(34) acetyltransferase, which mediates formation of carboxymethyluridine in the wobble base at position 34 in tRNAs. The protein is Elongator complex protein 3 of Schizosaccharomyces pombe (strain 972 / ATCC 24843) (Fission yeast).